A 533-amino-acid chain; its full sequence is MVQVLSVLVIPLLTLFFGYVASSSIDLSVDTSEYNRPLIHFTPEKGWMNDPNGLFYDKTAKLWHLYFQYNPNATAWGQPLYWGHATSNDLVHWDEHEIAIGPEHDNEGIFSGSIVVDHNNTSGFFNSSIDPNQRIVAIYTNNIPDLQTQDIAFSLDGGYTFTKYENNPVIDVSSNQFRDPKVFWHERFKSMDHGCSEIARVKIQIFGSANLKNWVLNSNFSSGYYGNQYGMSRLIEVPIENSDKSKWVMFLAINPGSPLGGSINQYFVGDFDGFQFVPDDSQTRFVDIGKDFYAFQTFSEVEHGVLGLAWASNWQYADQVPTNPWRSSTSLARNYTLRYVIQMLKLTANIDKSVLPDSINVVDKLKKKNVKLTNKKPIKTNFKGSTGLFDFNITFKVLNLNVSPGKTHFDILINSQELNSSVDSIKIGFDSSQSLFYIDRHIPNVEFPRKQFFTDKLAAYLEPLDYDQDLRVFSLYGIVDKNIIELYFNDGTVAMTNTFFMGEGKYPHDIQIVTDTEEPLFELESVIIRELNK.

A signal peptide spans 1–22 (MVQVLSVLVIPLLTLFFGYVAS). Substrate contacts are provided by residues 47-50 (WMND) and Gln68. The active site involves Asp50. A glycan (N-linked (GlcNAc...) asparagine) is linked at Asn72. 110–111 (FS) contributes to the substrate binding site. N-linked (GlcNAc...) asparagine glycans are attached at residues Asn119, Asn120, and Asn126. 178-179 (RD) contributes to the substrate binding site. A glycan (N-linked (GlcNAc...) asparagine) is linked at Asn219. Substrate is bound at residue Trp314. 3 N-linked (GlcNAc...) asparagine glycosylation sites follow: Asn334, Asn392, and Asn419.

This sequence belongs to the glycosyl hydrolase 32 family.

It catalyses the reaction Hydrolysis of terminal non-reducing beta-D-fructofuranoside residues in beta-D-fructofuranosides.. This is Invertase (INV) from Schwanniomyces occidentalis (Yeast).